The chain runs to 146 residues: Ribonuclease H (146 aa).

One can recognise an RNase H type-1 domain in the interval 1–142 (MNKIIIYTDG…ADALANLAMD (142 aa)). The Mg(2+) site is built by Asp-9, Glu-47, Asp-70, and Asp-134.

The protein belongs to the RNase H family. In terms of assembly, monomer. It depends on Mg(2+) as a cofactor.

Its subcellular location is the cytoplasm. It catalyses the reaction Endonucleolytic cleavage to 5'-phosphomonoester.. Endonuclease that specifically degrades the RNA of RNA-DNA hybrids. The polypeptide is Ribonuclease H (Ruthia magnifica subsp. Calyptogena magnifica).